Consider the following 110-residue polypeptide: UPF0122 protein SAR1212 (110 aa).

This sequence belongs to the UPF0122 family.

Functionally, might take part in the signal recognition particle (SRP) pathway. This is inferred from the conservation of its genetic proximity to ftsY/ffh. May be a regulatory protein. The sequence is that of UPF0122 protein SAR1212 from Staphylococcus aureus (strain MRSA252).